The sequence spans 278 residues: Probable aquaporin PIP2-8 (278 aa).

Position 1 is an N-acetylmethionine (Met-1). Residues 1–36 (MSKEVSEEGRHGKDYVDPPPAPLLDMAELKLWSFYR) are Cytoplasmic-facing. Lys-3 carries the N6,N6-dimethyllysine modification. The chain crosses the membrane as a helical span at residues 37 to 57 (AIIAEFIATLLFLYVTVATVI). Residues 58-74 (GHKNQTGPCGGVGLLGI) are Extracellular-facing. The helical transmembrane segment at 75-95 (AWAFGGMIFVLVYCTAGISGG) threads the bilayer. The Cytoplasmic portion of the chain corresponds to 96–116 (HINPAVTFGLFLARKVSLPRA). Positions 98-100 (NPA) match the NPA 1 motif. A helical membrane pass occupies residues 117–137 (VAYMVAQCLGAICGVGLVKAF). Residues 138 to 158 (MMTPYKRLGGGANTVADGYST) lie on the Extracellular side of the membrane. The helical transmembrane segment at 159–179 (GTALGAEIIGTFVLVYTVFSA) threads the bilayer. Residues 180 to 192 (TDPKRSARDSHVP) are Cytoplasmic-facing. The helical transmembrane segment at 193 to 213 (VLAPLPIGFAVFMVHLATIPI) threads the bilayer. Over 214–240 (TGTGINPARSFGAAVIYNNEKAWDDHW) the chain is Extracellular. Positions 219-221 (NPA) match the NPA 2 motif. Residues 241-261 (IFWVGPFVGALAAAAYHQYIL) traverse the membrane as a helical segment. Topologically, residues 262-278 (RAAAIKALASFRSNPTN) are cytoplasmic. Phosphoserine occurs at positions 271 and 274.

It belongs to the MIP/aquaporin (TC 1.A.8) family. PIP (TC 1.A.8.11) subfamily. As to expression, expressed in roots and floral buds.

Its subcellular location is the cell membrane. Its function is as follows. Aquaporins facilitate the transport of water and small neutral solutes across cell membranes. The chain is Probable aquaporin PIP2-8 (PIP2-8) from Arabidopsis thaliana (Mouse-ear cress).